Here is a 258-residue protein sequence, read N- to C-terminus: MQENLKNDKLKIGKYEFDSRFILGSGKYSLELIKSAIEEAKAQIITLALRRANTGEIANILDYIPKNITLLPNTSGARNADEALRIARLSRELGCGELIKIEVISDSRYLLPDNYETIKACELLAKEGFTPLPYMHADLYAARAMRDAGAAAIMPLAAPIGSNKGLCAKEFIQILLNEIDLPIIVDAGIGSPSQACEAMQMGVSAVMVNTAIAEAKDIALMAKAFSLAVNAGRAAFLAGLASVSKAKASSPLTGFLRD.

Lys-100 functions as the Schiff-base intermediate with DXP in the catalytic mechanism. Residues Gly-161, 187-188, and 209-210 contribute to the 1-deoxy-D-xylulose 5-phosphate site; these read AG and NT.

It belongs to the ThiG family. Homotetramer. Forms heterodimers with either ThiH or ThiS.

The protein resides in the cytoplasm. It catalyses the reaction [ThiS sulfur-carrier protein]-C-terminal-Gly-aminoethanethioate + 2-iminoacetate + 1-deoxy-D-xylulose 5-phosphate = [ThiS sulfur-carrier protein]-C-terminal Gly-Gly + 2-[(2R,5Z)-2-carboxy-4-methylthiazol-5(2H)-ylidene]ethyl phosphate + 2 H2O + H(+). The protein operates within cofactor biosynthesis; thiamine diphosphate biosynthesis. Its function is as follows. Catalyzes the rearrangement of 1-deoxy-D-xylulose 5-phosphate (DXP) to produce the thiazole phosphate moiety of thiamine. Sulfur is provided by the thiocarboxylate moiety of the carrier protein ThiS. In vitro, sulfur can be provided by H(2)S. In Campylobacter jejuni subsp. jejuni serotype O:23/36 (strain 81-176), this protein is Thiazole synthase.